The sequence spans 547 residues: Chaperonin GroEL (547 aa).

Residues Thr30–Pro33, Lys51, Asp87–Thr91, Gly415, Asn479–Ala481, and Asp495 contribute to the ATP site.

This sequence belongs to the chaperonin (HSP60) family. As to quaternary structure, forms a cylinder of 14 subunits composed of two heptameric rings stacked back-to-back. Interacts with the co-chaperonin GroES.

Its subcellular location is the cytoplasm. It carries out the reaction ATP + H2O + a folded polypeptide = ADP + phosphate + an unfolded polypeptide.. Together with its co-chaperonin GroES, plays an essential role in assisting protein folding. The GroEL-GroES system forms a nano-cage that allows encapsulation of the non-native substrate proteins and provides a physical environment optimized to promote and accelerate protein folding. The sequence is that of Chaperonin GroEL from Enterobacter sp. (strain 638).